We begin with the raw amino-acid sequence, 230 residues long: MACDLILVLDAPSPRDIAPVLKRLSGTVRWAKIGLEMYTACGPDCVREVADLGYNVFLDLKLHDIPNTVAKAVESAARLPIKMLTLHTCGGREMMSWAAKAQQQHAPELLLLGVTVLTSMSAVHLHEVGVPDSPEAQVVRLGRLAVDAGLRGLVCSPLEIAPLRAALPSDVTLVTPGIRPRDAAADDQTRVMTPAEAARTGANFLVIGRPIFKAPDPVAAARDILAELKS.

Substrate is bound by residues Asp-10, Lys-32, 59–68 (DLKLHDIPNT), Thr-118, Arg-179, Gln-188, Gly-208, and Arg-209. Lys-61 (proton donor) is an active-site residue.

The protein belongs to the OMP decarboxylase family. Type 1 subfamily. Homodimer.

It carries out the reaction orotidine 5'-phosphate + H(+) = UMP + CO2. Its pathway is pyrimidine metabolism; UMP biosynthesis via de novo pathway; UMP from orotate: step 2/2. Functionally, catalyzes the decarboxylation of orotidine 5'-monophosphate (OMP) to uridine 5'-monophosphate (UMP). The protein is Orotidine 5'-phosphate decarboxylase of Opitutus terrae (strain DSM 11246 / JCM 15787 / PB90-1).